The sequence spans 641 residues: Chaperone protein HtpG (641 aa).

Residues 1–351 (MTQSVHAETH…SNDLPLNVSR (351 aa)) form an a; substrate-binding region. The tract at residues 352-568 (EILQDNKVTV…AHGMSTQMIK (217 aa)) is b. Residues 569–641 (LMRAAGQPVP…SRINRLLLQA (73 aa)) are c.

It belongs to the heat shock protein 90 family. Homodimer.

It localises to the cytoplasm. Functionally, molecular chaperone. Has ATPase activity. In Aeromonas hydrophila subsp. hydrophila (strain ATCC 7966 / DSM 30187 / BCRC 13018 / CCUG 14551 / JCM 1027 / KCTC 2358 / NCIMB 9240 / NCTC 8049), this protein is Chaperone protein HtpG.